The sequence spans 235 residues: Large ribosomal subunit protein uL1 (235 aa).

The protein belongs to the universal ribosomal protein uL1 family. In terms of assembly, part of the 50S ribosomal subunit.

In terms of biological role, binds directly to 23S rRNA. The L1 stalk is quite mobile in the ribosome, and is involved in E site tRNA release. Functionally, protein L1 is also a translational repressor protein, it controls the translation of the L11 operon by binding to its mRNA. The sequence is that of Large ribosomal subunit protein uL1 from Symbiobacterium thermophilum (strain DSM 24528 / JCM 14929 / IAM 14863 / T).